Here is a 1070-residue protein sequence, read N- to C-terminus: DNA-directed RNA polymerase subunit beta (1070 aa).

Belongs to the RNA polymerase beta chain family. As to quaternary structure, in plastids the minimal PEP RNA polymerase catalytic core is composed of four subunits: alpha, beta, beta', and beta''. When a (nuclear-encoded) sigma factor is associated with the core the holoenzyme is formed, which can initiate transcription.

It is found in the plastid. Its subcellular location is the chloroplast. It catalyses the reaction RNA(n) + a ribonucleoside 5'-triphosphate = RNA(n+1) + diphosphate. DNA-dependent RNA polymerase catalyzes the transcription of DNA into RNA using the four ribonucleoside triphosphates as substrates. This is DNA-directed RNA polymerase subunit beta from Daucus carota (Wild carrot).